A 137-amino-acid chain; its full sequence is Nucleoside diphosphate kinase (137 aa).

ATP contacts are provided by Lys11, Phe59, Arg87, Thr93, Arg104, and Asn114. The Pros-phosphohistidine intermediate role is filled by His117.

This sequence belongs to the NDK family. As to quaternary structure, homotetramer. Requires Mg(2+) as cofactor.

It is found in the cytoplasm. The enzyme catalyses a 2'-deoxyribonucleoside 5'-diphosphate + ATP = a 2'-deoxyribonucleoside 5'-triphosphate + ADP. The catalysed reaction is a ribonucleoside 5'-diphosphate + ATP = a ribonucleoside 5'-triphosphate + ADP. In terms of biological role, major role in the synthesis of nucleoside triphosphates other than ATP. The ATP gamma phosphate is transferred to the NDP beta phosphate via a ping-pong mechanism, using a phosphorylated active-site intermediate. The protein is Nucleoside diphosphate kinase of Parafrankia sp. (strain EAN1pec).